A 155-amino-acid polypeptide reads, in one-letter code: Pathogenesis-related protein 2 (155 aa).

Belongs to the BetVI family.

The chain is Pathogenesis-related protein 2 from Phaseolus vulgaris (Kidney bean).